The following is an 86-amino-acid chain: Progonadoliberin-2 (86 aa).

Residues 1–24 (MVHICRLLVLMGMLLCLSAQFASS) form the signal peptide. At glutamine 25 the chain carries Pyrrolidone carboxylic acid. Glycine 34 carries the post-translational modification Glycine amide.

Belongs to the GnRH family.

The protein resides in the secreted. Stimulates the secretion of gonadotropins. In Rutilus rutilus (Roach), this protein is Progonadoliberin-2 (gnrh2).